Here is a 657-residue protein sequence, read N- to C-terminus: Protein FAM200B (657 aa).

Belongs to the FAM200 family.

This is Protein FAM200B from Homo sapiens (Human).